The chain runs to 103 residues: uncharacterized protein (103 aa).

The next 2 membrane-spanning stretches (helical) occupy residues leucine 13 to leucine 33 and phenylalanine 77 to phenylalanine 97.

It is found in the endoplasmic reticulum membrane. This is an uncharacterized protein from Schizosaccharomyces pombe (strain 972 / ATCC 24843) (Fission yeast).